A 526-amino-acid polypeptide reads, in one-letter code: Exodeoxyribonuclease 7 large subunit (526 aa).

A disordered region spans residues 496-526; sequence GAMTTEGGTPPAGAKKRSAKPADPTKQGSLF.

Belongs to the XseA family. In terms of assembly, heterooligomer composed of large and small subunits.

It is found in the cytoplasm. It carries out the reaction Exonucleolytic cleavage in either 5'- to 3'- or 3'- to 5'-direction to yield nucleoside 5'-phosphates.. Its function is as follows. Bidirectionally degrades single-stranded DNA into large acid-insoluble oligonucleotides, which are then degraded further into small acid-soluble oligonucleotides. This chain is Exodeoxyribonuclease 7 large subunit, found in Rhizobium etli (strain CIAT 652).